The sequence spans 119 residues: Small ribosomal subunit protein uS10 (119 aa).

Alanine 2 is modified (N-acetylalanine). Lysine 4 participates in a covalent cross-link: Glycyl lysine isopeptide (Lys-Gly) (interchain with G-Cter in ubiquitin). Lysine 8 carries the N6-succinyllysine; alternate modification. Residue lysine 8 forms a Glycyl lysine isopeptide (Lys-Gly) (interchain with G-Cter in ubiquitin); alternate linkage. Threonine 9 is subject to Phosphothreonine. Residues lysine 34 and lysine 75 each carry the N6-acetyllysine modification. A Phosphoserine modification is found at serine 93.

The protein belongs to the universal ribosomal protein uS10 family. In terms of assembly, component of the 40S small ribosomal subunit. Post-translationally, polyubiquitinated by ZNF598 via 'Lys-63'-linked ubiquitin chains when a ribosome has stalled, initiating the ribosome quality control (RQC) pathway to degrade the potentially detrimental aberrant nascent polypeptide. Deubiquitinated by OTUD3 and USP21, antagonizing ZNF598 activity. In terms of processing, ufmylated by UFL1.

It localises to the cytoplasm. Component of the small ribosomal subunit. The ribosome is a large ribonucleoprotein complex responsible for the synthesis of proteins in the cell. The polypeptide is Small ribosomal subunit protein uS10 (RPS20) (Pongo abelii (Sumatran orangutan)).